Here is a 380-residue protein sequence, read N- to C-terminus: Queuine tRNA-ribosyltransferase (380 aa).

Catalysis depends on Asp-96, which acts as the Proton acceptor. Substrate contacts are provided by residues 96-100, Asp-150, Gln-193, and Gly-220; that span reads DSGGF. The tract at residues 251 to 257 is RNA binding; it reads GVGAPDS. Residue Asp-270 is the Nucleophile of the active site. The segment at 275-279 is RNA binding; important for wobble base 34 recognition; sequence TRIAR. 4 residues coordinate Zn(2+): Cys-308, Cys-310, Cys-313, and His-339.

This sequence belongs to the queuine tRNA-ribosyltransferase family. In terms of assembly, homodimer. Within each dimer, one monomer is responsible for RNA recognition and catalysis, while the other monomer binds to the replacement base PreQ1. Requires Zn(2+) as cofactor.

The enzyme catalyses 7-aminomethyl-7-carbaguanine + guanosine(34) in tRNA = 7-aminomethyl-7-carbaguanosine(34) in tRNA + guanine. Its pathway is tRNA modification; tRNA-queuosine biosynthesis. In terms of biological role, catalyzes the base-exchange of a guanine (G) residue with the queuine precursor 7-aminomethyl-7-deazaguanine (PreQ1) at position 34 (anticodon wobble position) in tRNAs with GU(N) anticodons (tRNA-Asp, -Asn, -His and -Tyr). Catalysis occurs through a double-displacement mechanism. The nucleophile active site attacks the C1' of nucleotide 34 to detach the guanine base from the RNA, forming a covalent enzyme-RNA intermediate. The proton acceptor active site deprotonates the incoming PreQ1, allowing a nucleophilic attack on the C1' of the ribose to form the product. After dissociation, two additional enzymatic reactions on the tRNA convert PreQ1 to queuine (Q), resulting in the hypermodified nucleoside queuosine (7-(((4,5-cis-dihydroxy-2-cyclopenten-1-yl)amino)methyl)-7-deazaguanosine). This chain is Queuine tRNA-ribosyltransferase, found in Streptococcus pyogenes serotype M6 (strain ATCC BAA-946 / MGAS10394).